The following is a 315-amino-acid chain: HVA22-like protein h (315 aa).

The disordered stretch occupies residues 148 to 315 (PKPKPKEKKQ…RKARSAGAPR (168 aa)). Residues 173-190 (ATSQAASSNPQVRLQSKK) show a composition bias toward polar residues. Over residues 234–248 (PPGPPPPPPPPPPSP) the composition is skewed to pro residues.

This sequence belongs to the DP1 family.

This is HVA22-like protein h (HVA22H) from Arabidopsis thaliana (Mouse-ear cress).